We begin with the raw amino-acid sequence, 588 residues long: Protein cereblon (588 aa).

Disordered regions lie at residues 1-107 (MDDE…DDSD) and 159-197 (QERR…DIGF). Polar residues predominate over residues 41–50 (AWNNATQDEQ). The span at 75-85 (MVEDVLQDDTA) shows a compositional bias: acidic residues. The segment covering 86-96 (SEGSHPSSDMS) has biased composition (polar residues). Over residues 159–168 (QERRRSRTSE) the composition is skewed to basic and acidic residues. Pro residues predominate over residues 181 to 192 (NDPPPQQPPRPP). The Lon N-terminal domain occupies 228–454 (HMLIFLHQHI…LIKSTFKDES (227 aa)). A CULT domain is found at 453-562 (ESLFFCRYCN…LAGSSVRIGK (110 aa)). C458, C461, C527, and C530 together coordinate Zn(2+).

The protein belongs to the CRBN family. As to quaternary structure, likely a component of a DCX (DDB1-CUL4-X-box) protein ligase complex. May interact with pic/DDB1. Ubiquitinated.

It localises to the nucleus. Its pathway is protein modification; protein ubiquitination. Substrate recognition component of a DCX (DDB1-CUL4-X-box) E3 protein ligase complex that mediates the ubiquitination and subsequent proteasomal degradation of target proteins. Has an essential role in mediating growth by negatively regulating insulin signaling. It also has a role in maintaining presynaptic function in the neuromuscular junction synapses of third-instar larvae. The chain is Protein cereblon from Drosophila yakuba (Fruit fly).